The primary structure comprises 279 residues: Beta-porphyranase E (279 aa).

An N-terminal signal peptide occupies residues 1-18 (MGNTMLLTLLLVVVAAYG). The GH16 domain occupies 19–277 (QTPPPPEGFR…WVRSYTLLPV (259 aa)). Substrate is bound by residues W56, R60, E141, E146, and E243. E141 functions as the Nucleophile in the catalytic mechanism. E146 functions as the Proton donor in the catalytic mechanism.

It belongs to the glycosyl hydrolase 16 family.

It is found in the periplasm. It carries out the reaction Hydrolysis of beta-D-galactopyranose-(1-&gt;4)-alpha-L-galactopyranose-6-sulfate linkages in porphyran.. Its function is as follows. Cleaves the sulfated polysaccharide porphyran at the (1-&gt;4) linkages between beta-D-galactopyranose and alpha-L-galactopyranose-6-sulfate, forming mostly the disaccharide alpha-L-galactopyranose-6-sulfate-(1-&gt;3)-beta-D-galactose. The protein is Beta-porphyranase E (porE) of Zobellia galactanivorans (strain DSM 12802 / CCUG 47099 / CIP 106680 / NCIMB 13871 / Dsij).